The following is a 285-amino-acid chain: Hydroxyethylthiazole kinase (285 aa).

M43 lines the substrate pocket. ATP is bound by residues K119 and S172. Residue G199 coordinates substrate.

It belongs to the Thz kinase family. Mg(2+) serves as cofactor.

It carries out the reaction 5-(2-hydroxyethyl)-4-methylthiazole + ATP = 4-methyl-5-(2-phosphooxyethyl)-thiazole + ADP + H(+). The protein operates within cofactor biosynthesis; thiamine diphosphate biosynthesis; 4-methyl-5-(2-phosphoethyl)-thiazole from 5-(2-hydroxyethyl)-4-methylthiazole: step 1/1. In terms of biological role, catalyzes the phosphorylation of the hydroxyl group of 4-methyl-5-beta-hydroxyethylthiazole (THZ). The chain is Hydroxyethylthiazole kinase from Desulfovibrio desulfuricans (strain ATCC 27774 / DSM 6949 / MB).